The primary structure comprises 1024 residues: MPAARPPAAGLRGISLFLALLLGSPAAALERDALPEGDASPLGPYLLPSGAPERGSPGKEHPEERVVTAPPSSSQSAEVLGELVLDGTAPSAHHDIPALSPLLPEEARPKHALPPKKKLPSLKQVNSARKQLRPKATSAATVQRAGSQPASQGLDLLSSSTEKPGPPGDPDPIVASEEASEVPLWLDRKESAVPTTPAPLQISPFTSQPYVAHTLPQRPEPGEPGPDMAQEAPQEDTSPMALMDKGENELTGSASEESQETTTSTIITTTVITTEQAPALCSVSFSNPEGYIDSSDYPLLPLNNFLECTYNVTVYTGYGVELQVKSVNLSDGELLSIRGVDGPTLTVLANQTLLVEGQVIRSPTNTISVYFRTFQDDGLGTFQLHYQAFMLSCNFPRRPDSGDVTVMDLHSGGVAHFHCHLGYELQGAKMLTCINASKPHWSSQEPICSAPCGGAVHNATIGRVLSPSYPENTNGSQFCIWTIEAPEGQKLHLHFERLLLHDKDRMTVHSGQTNKSALLYDSLQTESVPFEGLLSEGNTIRIEFTSDQARAASTFNIRFEAFEKGHCYEPYIQNGNFTTSDPTYNIGTIVEFTCDPGHSLEQGPAIIECINVRDPYWNDTEPLCRAMCGGELSAVAGVVLSPNWPEPYVEGEDCIWKIHVGEEKRIFLDIQFLNLSNSDILTIYDGDEVMPHILGQYLGNSGPQKLYSSTPDLTIQFHSDPAGLIFGKGQGFIMNYIEVSRNDSCSDLPEIQNGWKTTSHTELVRGARITYQCDPGYDIVGSDTLTCQWDLSWSSDPPFCEKIMYCTDPGEVDHSTRLISDPVLLVGTTIQYTCNPGFVLEGSSLLTCYSRETGTPIWTSRLPHCVSEESLACDNPGLPENGYQILYKRLYLPGESLTFMCYEGFELMGEVTIRCILGQPSHWNGPLPVCKVNQDSFEHALEVAEAAAETSLEGGNMALAIFIPVLIISLLLGGAYIYITRCRYYSNLRLPLMYSHPYSQITVETEFDNPIYETGETREYEVSI.

The signal sequence occupies residues 1–28 (MPAARPPAAGLRGISLFLALLLGSPAAA). The Extracellular portion of the chain corresponds to 29–958 (LERDALPEGD…ETSLEGGNMA (930 aa)). 3 disordered regions span residues 33-77 (ALPE…SQSA), 108-184 (RPKH…EVPL), and 212-234 (AHTL…EAPQ). Ser49 carries O-linked (GalNAc...) serine glycosylation. Over residues 56-66 (SPGKEHPEERV) the composition is skewed to basic and acidic residues. Residues 110–120 (KHALPPKKKLP) are compositionally biased toward basic residues. Residues 138–162 (SAATVQRAGSQPASQGLDLLSSSTE) show a composition bias toward polar residues. O-glycosylated at one site stretches follow at residues 147–161 (SQPA…SSST) and 176–180 (SEEAS). A disulfide bond links Cys281 and Cys308. In terms of domain architecture, CUB 1 spans 281–389 (CSVSFSNPEG…GTFQLHYQAF (109 aa)). N-linked (GlcNAc...) asparagine glycosylation is found at Asn311, Asn328, and Asn350. Residues 391–450 (LSCNFPRRPDSGDVTVMDLHSGGVAHFHCHLGYELQGAKMLTCINASKPHWSSQEPICSA) enclose the Sushi 1 domain. Cystine bridges form between Cys393-Cys433 and Cys419-Cys448. N-linked (GlcNAc...) asparagine glycosylation is found at Asn435, Asn458, Asn474, Asn514, Asn576, Asn618, Asn674, and Asn742. A CUB 2 domain is found at 452–562 (CGGAVHNATI…STFNIRFEAF (111 aa)). The region spanning 565-626 (GHCYEPYIQN…WNDTEPLCRA (62 aa)) is the Sushi 2 domain. Disulfide bonds link Cys567-Cys609 and Cys594-Cys624. A CUB 3 domain is found at 628 to 739 (CGGELSAVAG…QGFIMNYIEV (112 aa)). Sushi domains are found at residues 743-802 (DSCS…FCEK), 804-867 (MYCT…HCVS), and 871-932 (LACD…VCKV). 6 disulfides stabilise this stretch: Cys745–Cys787, Cys773–Cys800, Cys806–Cys848, Cys834–Cys865, Cys873–Cys915, and Cys901–Cys930. Residues 959 to 979 (LAIFIPVLIISLLLGGAYIYI) traverse the membrane as a helical segment. Residues 980–1024 (TRCRYYSNLRLPLMYSHPYSQITVETEFDNPIYETGETREYEVSI) are Cytoplasmic-facing.

It belongs to the SEZ6 family. In terms of processing, O-glycosylated. In terms of tissue distribution, widely expressed, including adult and fetal brains and lungs. Not expressed in all lung cancer cell lines.

It is found in the endoplasmic reticulum membrane. May contribute to specialized endoplasmic reticulum functions in neurons. In Homo sapiens (Human), this protein is Seizure 6-like protein (SEZ6L).